The following is a 121-amino-acid chain: Apoptin (121 aa).

Disordered stretches follow at residues M1 to P28 and L57 to L121. The segment covering R58–F70 has biased composition (polar residues). Positions R88 to E102 are enriched in basic and acidic residues.

It belongs to the gyrovirus apoptin family.

It localises to the host nucleus. Functionally, may act as transcriptional regulator. Induces apoptosis in infected cells. Element of infectious replication cycle. The chain is Apoptin (VP3) from Gallus gallus (Chicken).